Here is a 54-residue protein sequence, read N- to C-terminus: Large ribosomal subunit protein bL33 (54 aa).

This sequence belongs to the bacterial ribosomal protein bL33 family.

In Chloroflexus aurantiacus (strain ATCC 29366 / DSM 635 / J-10-fl), this protein is Large ribosomal subunit protein bL33.